Consider the following 229-residue polypeptide: Ribosome maturation factor RimM (229 aa).

The segment at 1–39 is disordered; that stretch reads MAGHDSGSAKRGRSPSFGVFVRKPVERAPTKGAGDGAAD. One can recognise a PRC barrel domain in the interval 148–229; the sequence is ADEFYWVDLI…RIVVDWEADY (82 aa).

The protein belongs to the RimM family. Binds ribosomal protein uS19.

It is found in the cytoplasm. Functionally, an accessory protein needed during the final step in the assembly of 30S ribosomal subunit, possibly for assembly of the head region. Essential for efficient processing of 16S rRNA. May be needed both before and after RbfA during the maturation of 16S rRNA. It has affinity for free ribosomal 30S subunits but not for 70S ribosomes. The sequence is that of Ribosome maturation factor RimM from Burkholderia thailandensis (strain ATCC 700388 / DSM 13276 / CCUG 48851 / CIP 106301 / E264).